The chain runs to 537 residues: MQETGVHNGAYGTDKFGLKNLKGVYWNFGAPQLYEHALKNGEAVLSSDGALVADTGVFTGRSPKDKFTVRDATTENTMWWGGNQSITAEQFETLYQDFLKHAEGMTLFAQDLYGGADPTFRIKTRVYTELAWHSLFIRTLLRRPERAELENFVPELTLIDLPSFRADPKRHGCRSENVVAIDFARKIVLIGGTQYAGEMKKSVFTTLNYYLPEKGVLPMHCSANVGPNGDTAIFFGLSGTGKTTLSADPNRTLIGDDEHGWGKDGVFNFEGGCYAKCIKLSAENEPEIYAASTRFGAVLENVVLGEIDRKPDFDDGSKTENTRSAYPLESIPNASLTGRAGQPKNVVMLAADAFGVMPPIAKLTPAQAMYHFLSGYTAKVAGTERGVTEPTPEFSTCFGSPFLPRDPSVYGNMLRELIAKHNVDCWLVNTGWTGGIYGTGHRMPIKVTRALLTAALDGSLRNVEFRTDPYFGFAVPTALPGVPSEILDPVKTWADKAAFDTTARKLVGMFQKNFAKFEAQVDAEVRAAAPDVKMAAE.

Substrate contacts are provided by Arg-61, Tyr-195, and Lys-201. Residues Lys-201, His-220, and Gly-236–Thr-244 contribute to the ATP site. Positions 201 and 220 each coordinate Mn(2+). Position 257 (Asp-257) interacts with Mn(2+). The ATP site is built by Glu-285, Arg-323, and Thr-448. Arg-323 is a binding site for substrate.

Belongs to the phosphoenolpyruvate carboxykinase (ATP) family. Mn(2+) is required as a cofactor.

The protein localises to the cytoplasm. It catalyses the reaction oxaloacetate + ATP = phosphoenolpyruvate + ADP + CO2. It participates in carbohydrate biosynthesis; gluconeogenesis. Functionally, involved in the gluconeogenesis. Catalyzes the conversion of oxaloacetate (OAA) to phosphoenolpyruvate (PEP) through direct phosphoryl transfer between the nucleoside triphosphate and OAA. This Rhodopseudomonas palustris (strain TIE-1) protein is Phosphoenolpyruvate carboxykinase (ATP).